The primary structure comprises 240 residues: Mannosyl-D-glycerate transport/metabolism system repressor MngR (240 aa).

Positions 4–72 constitute an HTH gntR-type domain; sequence KPLYRQIADR…QGSGTYVKEE (69 aa). Positions 32–51 form a DNA-binding region, H-T-H motif; the sequence is ESALQTEFGVSRVTVRQALR.

Represses mngA and mngB. Regulates its own expression. This Escherichia coli (strain K12) protein is Mannosyl-D-glycerate transport/metabolism system repressor MngR (mngR).